The primary structure comprises 617 residues: Protein kinase STUNTED (617 aa).

The tract at residues 162–187 (SSELSEGFSDKDLAKTTGQEKRKISG) is disordered. The span at 169–184 (FSDKDLAKTTGQEKRK) shows a compositional bias: basic and acidic residues. One can recognise a Protein kinase domain in the interval 277 to 555 (FSLENLIGKG…RGEDDVSKWV (279 aa)). Residues 283–291 (IGKGGCNEV) and Lys305 each bind ATP. A Phosphotyrosine modification is found at Tyr350. The active-site Proton acceptor is the Asp399. Phosphoserine is present on Ser403. The residue at position 439 (Thr439) is a Phosphothreonine. At Tyr447 the chain carries Phosphotyrosine. Residues 590 to 617 (DSVSNSSLERSNNSLFSSSSSSSQELQS) form a disordered region. A compositionally biased stretch (low complexity) spans 591–617 (SVSNSSLERSNNSLFSSSSSSSQELQS).

It belongs to the protein kinase superfamily. Ser/Thr protein kinase family. In terms of tissue distribution, expressed ubiquitously, mostly in roots, to a lower extent in leaves, floral buds and stems, and, at low levels, in flowers and siliques.

It localises to the cytoplasm. Promotes cell proliferation in the gibberellic acid (GA) signaling pathway, acting downstream of RGA, and possibly through a negative regulation of two cyclin-dependent kinase inhibitors SIM and SMR1. The polypeptide is Protein kinase STUNTED (Arabidopsis thaliana (Mouse-ear cress)).